The following is a 210-amino-acid chain: Pyridoxine/pyridoxamine 5'-phosphate oxidase (210 aa).

Residues 7–10 (REDY) and Lys65 each bind substrate. Residues 60 to 65 (RMVLLK), 75 to 76 (FT), Arg81, Lys82, and Gln104 contribute to the FMN site. Positions 122, 126, and 130 each coordinate substrate. Residues 139–140 (QS) and Trp183 contribute to the FMN site. 189-191 (RLH) lines the substrate pocket. Arg193 serves as a coordination point for FMN.

Belongs to the pyridoxamine 5'-phosphate oxidase family. Homodimer. Requires FMN as cofactor.

The catalysed reaction is pyridoxamine 5'-phosphate + O2 + H2O = pyridoxal 5'-phosphate + H2O2 + NH4(+). It carries out the reaction pyridoxine 5'-phosphate + O2 = pyridoxal 5'-phosphate + H2O2. It functions in the pathway cofactor metabolism; pyridoxal 5'-phosphate salvage; pyridoxal 5'-phosphate from pyridoxamine 5'-phosphate: step 1/1. It participates in cofactor metabolism; pyridoxal 5'-phosphate salvage; pyridoxal 5'-phosphate from pyridoxine 5'-phosphate: step 1/1. Its function is as follows. Catalyzes the oxidation of either pyridoxine 5'-phosphate (PNP) or pyridoxamine 5'-phosphate (PMP) into pyridoxal 5'-phosphate (PLP). The protein is Pyridoxine/pyridoxamine 5'-phosphate oxidase of Neisseria meningitidis serogroup C (strain 053442).